We begin with the raw amino-acid sequence, 792 residues long: LPS-assembly protein LptD (792 aa).

The signal sequence occupies residues 1–22; the sequence is MYRVLRLLPLPLSVAISLSALA.

It belongs to the LptD family. Component of the lipopolysaccharide transport and assembly complex. Interacts with LptE and LptA.

The protein resides in the cell outer membrane. Its function is as follows. Together with LptE, is involved in the assembly of lipopolysaccharide (LPS) at the surface of the outer membrane. In Xylella fastidiosa (strain Temecula1 / ATCC 700964), this protein is LPS-assembly protein LptD.